Consider the following 527-residue polypeptide: tRNA (uracil(54)-C(5))-methyltransferase (527 aa).

Residues 107–167 enclose the TRAM domain; sequence PFERFQEIEV…DTYALADFLE (61 aa). C182, C188, C191, and C276 together coordinate [4Fe-4S] cluster. S-adenosyl-L-methionine is bound by residues Q347, Y383, E404, and D451. C478 (nucleophile) is an active-site residue. E517 acts as the Proton acceptor in catalysis.

Belongs to the class I-like SAM-binding methyltransferase superfamily. RNA M5U methyltransferase family.

The catalysed reaction is uridine(54) in tRNA + S-adenosyl-L-methionine = 5-methyluridine(54) in tRNA + S-adenosyl-L-homocysteine + H(+). Functionally, catalyzes the formation of 5-methyl-uridine at position 54 (m5U54) in all tRNA. May also have a role in tRNA stabilization or maturation. This chain is tRNA (uracil(54)-C(5))-methyltransferase, found in Schizosaccharomyces pombe (strain 972 / ATCC 24843) (Fission yeast).